A 100-amino-acid chain; its full sequence is Gas vesicle protein J (100 aa).

It belongs to the gas vesicle GvpA family. In terms of assembly, interacts with GvpA.

It is found in the gas vesicle. Its function is as follows. A minor component of the gas vesicle, might be involved in nucleating gas vesicle formation. This protein could be important for the shape determination of the gas vesicle. Gas vesicles (GV) are hollow, gas filled proteinaceous nanostructures. During planktonic growth they allow positioning of the organism at a favorable depth for light or nutrient acquisition. When a minimal gvp locus (gvpA2-gvpR-gvpN-gvpF-gvpG-gvpL-gvpS-gvpK-gvpJ-gvpT-gvpU, called pNL29) is expressed in E.coli gas vesicles are made. This chain is Gas vesicle protein J, found in Priestia megaterium (Bacillus megaterium).